The primary structure comprises 373 residues: Cystathionine gamma-synthase/O-acetylhomoserine (thiol)-lyase (373 aa).

At lysine 197 the chain carries N6-(pyridoxal phosphate)lysine.

The protein belongs to the trans-sulfuration enzymes family. As to quaternary structure, homotetramer. The cofactor is pyridoxal 5'-phosphate.

Its subcellular location is the cytoplasm. It catalyses the reaction O-acetyl-L-homoserine + L-cysteine = L,L-cystathionine + acetate + H(+). The catalysed reaction is O-acetyl-L-homoserine + hydrogen sulfide = L-homocysteine + acetate. Its pathway is amino-acid biosynthesis; L-methionine biosynthesis via de novo pathway. In terms of biological role, catalyzes the formation of L-cystathionine from O-acetyl-L-homoserine and L-cysteine. Cannot use O-succinyl-L-homoserine as substrate. Also exhibits O-acetylhomoserine thiolyase activity, catalyzing the synthesis of L-homocysteine from O-acetyl-L-homoserine and sulfide. The polypeptide is Cystathionine gamma-synthase/O-acetylhomoserine (thiol)-lyase (metI) (Bacillus subtilis (strain 168)).